Here is a 1406-residue protein sequence, read N- to C-terminus: DNA-directed RNA polymerase subunit beta' (1406 aa).

Residues cysteine 70, cysteine 72, cysteine 85, and cysteine 88 each coordinate Zn(2+). Mg(2+) is bound by residues aspartate 460, aspartate 462, and aspartate 464. Cysteine 814, cysteine 888, cysteine 895, and cysteine 898 together coordinate Zn(2+).

Belongs to the RNA polymerase beta' chain family. As to quaternary structure, the RNAP catalytic core consists of 2 alpha, 1 beta, 1 beta' and 1 omega subunit. When a sigma factor is associated with the core the holoenzyme is formed, which can initiate transcription. Requires Mg(2+) as cofactor. Zn(2+) is required as a cofactor.

The catalysed reaction is RNA(n) + a ribonucleoside 5'-triphosphate = RNA(n+1) + diphosphate. DNA-dependent RNA polymerase catalyzes the transcription of DNA into RNA using the four ribonucleoside triphosphates as substrates. The sequence is that of DNA-directed RNA polymerase subunit beta' from Sodalis glossinidius (strain morsitans).